Reading from the N-terminus, the 445-residue chain is Gamma-glutamyl phosphate reductase (445 aa).

This sequence belongs to the gamma-glutamyl phosphate reductase family.

Its subcellular location is the cytoplasm. The enzyme catalyses L-glutamate 5-semialdehyde + phosphate + NADP(+) = L-glutamyl 5-phosphate + NADPH + H(+). Its pathway is amino-acid biosynthesis; L-proline biosynthesis; L-glutamate 5-semialdehyde from L-glutamate: step 2/2. Catalyzes the NADPH-dependent reduction of L-glutamate 5-phosphate into L-glutamate 5-semialdehyde and phosphate. The product spontaneously undergoes cyclization to form 1-pyrroline-5-carboxylate. This Synechococcus sp. (strain RCC307) protein is Gamma-glutamyl phosphate reductase.